The primary structure comprises 378 residues: Probable endopolygalacturonase E (378 aa).

An N-terminal signal peptide occupies residues 1-19; the sequence is MVTSSSVIVLTLWAALVSA. Residues 20–38 constitute a propeptide that is removed on maturation; it reads SPVADPLVTPAPKLEDLEK. Cysteines 43 and 61 form a disulfide. PbH1 repeat units follow at residues 103–125, 174–204, and 205–226; these read GPLV…YLNG, STYL…DIGD, and STYI…AVNS. Asp219 (proton donor) is an active-site residue. An intrachain disulfide couples Cys221 to Cys237. The active site involves His241. 3 PbH1 repeats span residues 256–277, 285–307, and 317–345; these read VKNV…RIKT, VSEV…VVEQ, and TDGI…YIVC. Residue Asn258 is glycosylated (N-linked (GlcNAc...) asparagine). Intrachain disulfides connect Cys345/Cys350 and Cys369/Cys378.

The protein belongs to the glycosyl hydrolase 28 family.

It is found in the secreted. It carries out the reaction (1,4-alpha-D-galacturonosyl)n+m + H2O = (1,4-alpha-D-galacturonosyl)n + (1,4-alpha-D-galacturonosyl)m.. In terms of biological role, involved in maceration and soft-rotting of plant tissue. Hydrolyzes the 1,4-alpha glycosidic bonds of de-esterified pectate in the smooth region of the plant cell wall. In Aspergillus niger (strain ATCC MYA-4892 / CBS 513.88 / FGSC A1513), this protein is Probable endopolygalacturonase E (pgaE).